Consider the following 81-residue polypeptide: Sulfur carrier protein TusA (81 aa).

The active-site Cysteine persulfide intermediate is the Cys-19.

Belongs to the sulfur carrier protein TusA family. As to quaternary structure, interacts with IscS.

It localises to the cytoplasm. It participates in tRNA modification. Sulfur carrier protein involved in sulfur trafficking in the cell. Part of a sulfur-relay system required for 2-thiolation during synthesis of 2-thiouridine of the modified wobble base 5-methylaminomethyl-2-thiouridine (mnm(5)s(2)U) in tRNA. Interacts with IscS and stimulates its cysteine desulfurase activity. Accepts an activated sulfur from IscS, which is then transferred to TusD, and thus determines the direction of sulfur flow from IscS to 2-thiouridine formation. Also appears to be involved in sulfur transfer for the biosynthesis of molybdopterin. The polypeptide is Sulfur carrier protein TusA (Escherichia coli O17:K52:H18 (strain UMN026 / ExPEC)).